Reading from the N-terminus, the 403-residue chain is 3-oxoacyl-[acyl-carrier-protein] synthase 2 (403 aa).

One can recognise a Ketosynthase family 3 (KS3) domain in the interval 1–403 (VITGMGALSP…GGHNAVLVFK (403 aa)). Residues Cys158, His297, and His334 each act as for beta-ketoacyl synthase activity in the active site.

It belongs to the thiolase-like superfamily. Beta-ketoacyl-ACP synthases family.

It catalyses the reaction a fatty acyl-[ACP] + malonyl-[ACP] + H(+) = a 3-oxoacyl-[ACP] + holo-[ACP] + CO2. It carries out the reaction (9Z)-hexadecenoyl-[ACP] + malonyl-[ACP] + H(+) = 3-oxo-(11Z)-octadecenoyl-[ACP] + holo-[ACP] + CO2. The protein operates within lipid metabolism; fatty acid biosynthesis. Functionally, involved in the type II fatty acid elongation cycle. Catalyzes the elongation of a wide range of acyl-ACP by the addition of two carbons from malonyl-ACP to an acyl acceptor. Can efficiently catalyze the conversion of palmitoleoyl-ACP (cis-hexadec-9-enoyl-ACP) to cis-vaccenoyl-ACP (cis-octadec-11-enoyl-ACP), an essential step in the thermal regulation of fatty acid composition. This chain is 3-oxoacyl-[acyl-carrier-protein] synthase 2 (fabF), found in Staphylococcus aureus.